Reading from the N-terminus, the 213-residue chain is Imidazole glycerol phosphate synthase subunit HisH 1 (213 aa).

Positions 3–213 (SVSILDYGVG…LSIIQQFLQI (211 aa)) constitute a Glutamine amidotransferase type-1 domain. Cysteine 81 functions as the Nucleophile in the catalytic mechanism. Active-site residues include histidine 195 and glutamate 197.

Heterodimer of HisH and HisF.

The protein localises to the cytoplasm. It carries out the reaction 5-[(5-phospho-1-deoxy-D-ribulos-1-ylimino)methylamino]-1-(5-phospho-beta-D-ribosyl)imidazole-4-carboxamide + L-glutamine = D-erythro-1-(imidazol-4-yl)glycerol 3-phosphate + 5-amino-1-(5-phospho-beta-D-ribosyl)imidazole-4-carboxamide + L-glutamate + H(+). It catalyses the reaction L-glutamine + H2O = L-glutamate + NH4(+). It functions in the pathway amino-acid biosynthesis; L-histidine biosynthesis; L-histidine from 5-phospho-alpha-D-ribose 1-diphosphate: step 5/9. Functionally, IGPS catalyzes the conversion of PRFAR and glutamine to IGP, AICAR and glutamate. The HisH subunit provides the glutamine amidotransferase activity that produces the ammonia necessary to HisF for the synthesis of IGP and AICAR. The polypeptide is Imidazole glycerol phosphate synthase subunit HisH 1 (Legionella pneumophila (strain Lens)).